A 539-amino-acid polypeptide reads, in one-letter code: G protein-coupled receptor associated sorting protein 3 (539 aa).

The span at 1 to 10 shows a compositional bias: basic residues; the sequence is MTGSKNKARA. 2 disordered regions span residues 1–111 and 132–170; these read MTGS…DSWF and NSVAKCENKPSTSIQARVEEHTPRTSHKSRSGAEEEEEE. Basic and acidic residues-rich tracts occupy residues 66–80 and 88–106; these read VVAETKEGARPESKA and FNHKAENKYARSARKDKPS. Over residues 132–146 the composition is skewed to polar residues; it reads NSVAKCENKPSTSIQ.

This sequence belongs to the GPRASP family. Homodimer.

The protein localises to the cytoplasm. It is found in the nucleus. Its function is as follows. Survival and differentiation promoting protein that plays a role in the regulation of neurosynaptogenesis. Induces phosphatase PP2A activity which results in APP dephosphorylation and inhibits BACE1-mediated processing of APP. The sequence is that of G protein-coupled receptor associated sorting protein 3 (Gprasp3) from Rattus norvegicus (Rat).